A 204-amino-acid polypeptide reads, in one-letter code: MTIPIVIEQSGRGERAFDIYSRLLRERIIFLGQQVDSNLANLIVAQLLFLDAEDPEKDIYLYINSPGGSVTAGMGIFDTMKHIRPDVCTICTGLAASMGAFLLSAGTKGKRMSLPHSRIMIHQPLGGAQGQATDIEIQAREILYHKRRLNDYLAEHTGQPIERIAEDTERDFFMSPDEARDYGLIDQVIDRHAAGSRPVAMVNQ.

The active-site Nucleophile is the S97. The active site involves H122.

This sequence belongs to the peptidase S14 family. In terms of assembly, fourteen ClpP subunits assemble into 2 heptameric rings which stack back to back to give a disk-like structure with a central cavity, resembling the structure of eukaryotic proteasomes.

The protein resides in the cytoplasm. It carries out the reaction Hydrolysis of proteins to small peptides in the presence of ATP and magnesium. alpha-casein is the usual test substrate. In the absence of ATP, only oligopeptides shorter than five residues are hydrolyzed (such as succinyl-Leu-Tyr-|-NHMec, and Leu-Tyr-Leu-|-Tyr-Trp, in which cleavage of the -Tyr-|-Leu- and -Tyr-|-Trp bonds also occurs).. In terms of biological role, cleaves peptides in various proteins in a process that requires ATP hydrolysis. Has a chymotrypsin-like activity. Plays a major role in the degradation of misfolded proteins. This chain is ATP-dependent Clp protease proteolytic subunit 1, found in Trichormus variabilis (strain ATCC 29413 / PCC 7937) (Anabaena variabilis).